Consider the following 377-residue polypeptide: Gap junction gamma-1 protein (377 aa).

The Cytoplasmic portion of the chain corresponds to 1–18 (MSWSFLTRLLEEINNHST). A helical transmembrane segment spans residues 19-39 (FVGKIWLTVLIIFRIVLTAVG). Residues 40-75 (GESIYYDEQSKFTCNTHQPGCENVCYDAFAPLSHVR) are Extracellular-facing. A helical transmembrane segment spans residues 76 to 96 (FWVFQIILITTPSIMYLGFAM). Over 97–174 (HRIARQPDEQ…RRIKQDGLMK (78 aa)) the chain is Cytoplasmic. Residues 129–163 (DYEEAEDNQEEDPMICEEEEPEKDSEKGDKKKHDG) are disordered. A compositionally biased stretch (acidic residues) spans 131-151 (EEAEDNQEEDPMICEEEEPEK). Residues 175-197 (VYVLQLLFRSVFEVGFLMGQYVL) traverse the membrane as a helical segment. Residues 198-228 (YGFEVIPFFVCSRNPCPHTVDCFVSRPTEKT) are Extracellular-facing. The helical transmembrane segment at 229 to 249 (IFLLIMYAVSALCLFLNLCEL) threads the bilayer. The Cytoplasmic portion of the chain corresponds to 250 to 377 (FHLGIGGIRD…GVGSREKSGL (128 aa)). 2 disordered regions span residues 266–286 (KEIQ…HSVL) and 341–377 (AHAS…KSGL). The span at 344–362 (SRSSSPEANSIAAEQNRLN) shows a compositional bias: polar residues.

Belongs to the connexin family. Gamma-type subfamily. In terms of assembly, a connexon is composed of a hexamer of connexins.

Its subcellular location is the cell membrane. It localises to the cell junction. The protein localises to the gap junction. In terms of biological role, one gap junction consists of a cluster of closely packed pairs of transmembrane channels, the connexons, through which materials of low MW diffuse from one cell to a neighboring cell. The polypeptide is Gap junction gamma-1 protein (gjc1) (Xenopus laevis (African clawed frog)).